The chain runs to 129 residues: Virion-associated protein (129 aa).

Coiled-coil stretches lie at residues 1–31 (MANLNQIQKEVSEILSDQKSMKADIKAILEL) and 38–59 (IKESLETVAAKIVNDLTKLIND). A capsid binding region spans residues 122–129 (PAGWPNQF).

The protein belongs to the caulimovirus ORF III family. Homotetramer, through coiled-coil domain. Homotrimer when bound on icosehadral capsid. Interacts with capsid protein, and with movement protein.

It is found in the virion. The protein resides in the host cell junction. The protein localises to the host plasmodesma. In terms of biological role, plays a role in virus cell-to-cell and plant-to-plant transmission. Interacts with virion icosahedral capsid and movement protein, thereby facilitating virion cell-to-cell transmission through plasmodesmata opened by viral movement protein. Also interacts with aphid transmission factor, attaching the virion to aphid stylet when the animal feeds on an virus infected plant. Aphid saliva may later detach the virion, inducing release of infectious particles when the animal feeds on a new plant. The chain is Virion-associated protein from Cauliflower mosaic virus (strain Strasbourg) (CaMV).